Reading from the N-terminus, the 239-residue chain is tRNA (guanine-N(7)-)-methyltransferase (239 aa).

S-adenosyl-L-methionine is bound by residues glutamate 69, glutamate 94, aspartate 121, and aspartate 144. Aspartate 144 is an active-site residue. Lysine 148 contributes to the substrate binding site. The interaction with RNA stretch occupies residues arginine 150–arginine 155. Substrate is bound by residues aspartate 180 and threonine 217–glutamate 220.

It belongs to the class I-like SAM-binding methyltransferase superfamily. TrmB family. In terms of assembly, monomer.

It carries out the reaction guanosine(46) in tRNA + S-adenosyl-L-methionine = N(7)-methylguanosine(46) in tRNA + S-adenosyl-L-homocysteine. The protein operates within tRNA modification; N(7)-methylguanine-tRNA biosynthesis. Catalyzes the formation of N(7)-methylguanine at position 46 (m7G46) in tRNA. The protein is tRNA (guanine-N(7)-)-methyltransferase of Sodalis glossinidius (strain morsitans).